The sequence spans 640 residues: 1-deoxy-D-xylulose-5-phosphate synthase (640 aa).

Thiamine diphosphate is bound by residues His75 and 117-119 (GHA). A Mg(2+)-binding site is contributed by Asp146. Residues 147–148 (AA), Asn175, and Glu370 each bind thiamine diphosphate. Asn175 contributes to the Mg(2+) binding site.

It belongs to the transketolase family. DXPS subfamily. Homodimer. Mg(2+) is required as a cofactor. Thiamine diphosphate serves as cofactor.

The catalysed reaction is D-glyceraldehyde 3-phosphate + pyruvate + H(+) = 1-deoxy-D-xylulose 5-phosphate + CO2. It functions in the pathway metabolic intermediate biosynthesis; 1-deoxy-D-xylulose 5-phosphate biosynthesis; 1-deoxy-D-xylulose 5-phosphate from D-glyceraldehyde 3-phosphate and pyruvate: step 1/1. Functionally, catalyzes the acyloin condensation reaction between C atoms 2 and 3 of pyruvate and glyceraldehyde 3-phosphate to yield 1-deoxy-D-xylulose-5-phosphate (DXP). The sequence is that of 1-deoxy-D-xylulose-5-phosphate synthase from Chlamydia trachomatis serovar A (strain ATCC VR-571B / DSM 19440 / HAR-13).